The sequence spans 206 residues: Large ribosomal subunit protein uL22m (206 aa).

The N-terminal 40 residues, M1 to D40, are a transit peptide targeting the mitochondrion.

It belongs to the universal ribosomal protein uL22 family. Component of the mitochondrial ribosome large subunit (39S) which comprises a 16S rRNA and about 50 distinct proteins.

The protein localises to the mitochondrion. This Rattus norvegicus (Rat) protein is Large ribosomal subunit protein uL22m (Mrpl22).